Here is a 463-residue protein sequence, read N- to C-terminus: Sodium-coupled neutral amino acid transporter 7 (463 aa).

Position 28 is a phosphoserine (Ser28). The next 11 membrane-spanning stretches (helical) occupy residues 56 to 76 (AVFIVVNACLGAGLLNFPAAF), 82 to 102 (VAAGIALQMGMLVFIISGLVI), 130 to 150 (LCEIAIAVYTFGTCIAFLIII), 179 to 199 (FTISLTAFLFILPLSIPKEIG), 206 to 226 (SLSVVGTWYVTAIVIIKYIWP), 240 to 260 (ASWMAVFNAMPTICFGFQCHV), 283 to 303 (AAMVIALAVYMGTGICGFLTF), 320 to 340 (VAVAVARAFIILSVLTSYPIL), 372 to 392 (VLQTLVWFLLTLLLALFIPDI), 396 to 416 (ISVIGGLAACFIFIFPGLCLI), and 429 to 449 (ASWWALVSYGVLLVTLGAFIF).

It belongs to the amino acid/polyamine transporter 2 family. In terms of assembly, interacts with the mTORC1 complex; this interaction mediates the recruitment of mTORC1 to the lysosome and its subsequent activation.

The protein resides in the lysosome membrane. It localises to the cell projection. The protein localises to the axon. The enzyme catalyses L-asparagine(in) + Na(+)(in) = L-asparagine(out) + Na(+)(out). It carries out the reaction L-glutamine(in) + Na(+)(in) = L-glutamine(out) + Na(+)(out). Symporter that selectively cotransports sodium ions and amino acids, such as L-glutamine and L-asparagine from the lysosome into the cytoplasm and may participates in mTORC1 activation. The transport activity requires an acidic lysosomal lumen. The polypeptide is Sodium-coupled neutral amino acid transporter 7 (Rattus norvegicus (Rat)).